Consider the following 579-residue polypeptide: Fatty-acid amide hydrolase 1 (579 aa).

Residues 9–29 form a helical membrane-spanning segment; that stretch reads ALSGLSGVCLACSLLSAAVVL. Residues 30 to 403 are Cytoplasmic-facing; the sequence is RWTRSQTARG…GDFVDPCLGD (374 aa). Catalysis depends on Lys142, which acts as the Charge relay system. Substrate is bound by residues Met191, Ser217, and 238–241; that span reads IGGS. Ser217 (charge relay system) is an active-site residue. The active-site Acyl-ester intermediate is Ser241. Ser241 is subject to Phosphoserine. The stretch at 404–433 is an intramembrane region; the sequence is LVLVLKLPRWFKKLLSFLLKPLFPRLAAFL. At 434–579 the chain is on the cytoplasmic side; it reads NSMCPRSAEK…RLMTPEKRPS (146 aa).

It belongs to the amidase family. In terms of assembly, homodimer.

It is found in the endoplasmic reticulum membrane. The protein resides in the golgi apparatus membrane. The catalysed reaction is N-(5Z,8Z,11Z,14Z-eicosatetraenoyl)-ethanolamine + H2O = ethanolamine + (5Z,8Z,11Z,14Z)-eicosatetraenoate. It carries out the reaction (9Z)-octadecenamide + H2O = (9Z)-octadecenoate + NH4(+). It catalyses the reaction 2-(5Z,8Z,11Z,14Z-eicosatetraenoyl)-glycerol + H2O = glycerol + (5Z,8Z,11Z,14Z)-eicosatetraenoate + H(+). The enzyme catalyses N-(9Z-hexadecenoyl) ethanolamine + H2O = (9Z)-hexadecenoate + ethanolamine. The catalysed reaction is N-(9Z-octadecenoyl) ethanolamine + H2O = ethanolamine + (9Z)-octadecenoate. It carries out the reaction N-octadecanoyl ethanolamine + H2O = octadecanoate + ethanolamine. It catalyses the reaction N-docosanoyl-ethanolamine + H2O = docosanoate + ethanolamine. The enzyme catalyses N-tetracosanoyl-taurine + H2O = tetracosanoate + taurine. The catalysed reaction is N-(15Z-tetracosenoyl)-ethanolamine + H2O = (15Z)-tetracosenoate + ethanolamine. It carries out the reaction N-(9Z-octadecenoyl)-taurine + H2O = taurine + (9Z)-octadecenoate. It catalyses the reaction N-docosanoyl-taurine + H2O = docosanoate + taurine. The enzyme catalyses N-(15Z-tetracosenoyl)-taurine + H2O = (15Z)-tetracosenoate + taurine. The catalysed reaction is N-tricosanoyl-taurine + H2O = tricosanoate + taurine. It carries out the reaction (9Z,12Z,15Z)-octadecatrienamide + H2O = (9Z,12Z,15Z)-octadecatrienoate + NH4(+). It catalyses the reaction (5Z,8Z,11Z,14Z)-eicosatetraenamide + H2O = (5Z,8Z,11Z,14Z)-eicosatetraenoate + NH4(+). The enzyme catalyses (6Z)-octadecenamide + H2O = (6Z)-octadecenoate + NH4(+). The catalysed reaction is (15Z)-tetracosenamide + H2O = (15Z)-tetracosenoate + NH4(+). It carries out the reaction (8Z,11Z,14Z)-eicosatrienamide + H2O = (8Z,11Z,14Z)-eicosatrienoate + NH4(+). It catalyses the reaction (11Z,14Z,17Z)-eicosatrienamide + H2O = (11Z,14Z,17Z)-eicosatrienoate + NH4(+). The enzyme catalyses (11Z,14Z)-eicosadienamide + H2O = (11Z,14Z)-eicosadienoate + NH4(+). The catalysed reaction is (9Z,12Z)-octadecadienamide + H2O = (9Z,12Z)-octadecadienoate + NH4(+). It carries out the reaction tetradecamide + H2O = tetradecanoate + NH4(+). It catalyses the reaction 1-O-methyl-(5Z,8Z,11Z,14Z)-eicosatetraenoate + H2O = methanol + (5Z,8Z,11Z,14Z)-eicosatetraenoate + H(+). The enzyme catalyses (11Z)-eicosenamide + H2O = (11Z)-eicosenoate + NH4(+). The catalysed reaction is (9Z)-octadecenoate + glycine = N-(9Z-octadecenoyl)glycine + H2O. It carries out the reaction N-(5Z,8Z,11Z,14Z)-eicosatetraenoyl-glycine + H2O = (5Z,8Z,11Z,14Z)-eicosatetraenoate + glycine. It catalyses the reaction N-(5Z,8Z,11Z,14Z-eicosatetraenoyl)-L-serine + H2O = (5Z,8Z,11Z,14Z)-eicosatetraenoate + L-serine. Inhibited the trifluoromethyl compound PF-3845. Functionally, catalyzes the hydrolysis of endogenous amidated lipids like the endocannabinoid anandamide (N-(5Z,8Z,11Z,14Z-eicosatetraenoyl)-ethanolamine), as well as other fatty amides such as the taurine-conjugated fatty acids (a structural class of central nervous system (CNS) metabolites), to their corresponding fatty acids, thereby regulating the signaling functions of these molecules. FAAH cooperates with PM20D1 in the hydrolysis of amino acid-conjugated fatty acids such as N-fatty acyl glycine and N-fatty acyl-L-serine, thereby acting as a physiological regulator of specific subsets of intracellular, but not of extracellular, N-fatty acyl amino acids. It can also catalyze the hydrolysis of the endocannabinoid 2-arachidonoylglycerol (2-(5Z,8Z,11Z,14Z-eicosatetraenoyl)-glycerol). This is Fatty-acid amide hydrolase 1 (Faah) from Mus musculus (Mouse).